A 385-amino-acid chain; its full sequence is Probable caffeine synthase MTL1 (385 aa).

S-adenosyl-L-homocysteine contacts are provided by Tyr18, Cys62, Asn67, Asp101, Leu102, Ser140, and Phe141. Caffeine is bound by residues Tyr158, Gln161, and Phe162. Asn179 serves as a coordination point for Mg(2+). A caffeine-binding site is contributed by Thr238. 3 residues coordinate Mg(2+): Asp261, Phe263, and Asn264. Position 369 (Tyr369) interacts with caffeine.

The protein belongs to the methyltransferase superfamily. Type-7 methyltransferase family. The cofactor is Mg(2+).

Its pathway is alkaloid biosynthesis. May be involved in the biosynthesis of caffeine. This chain is Probable caffeine synthase MTL1, found in Coffea canephora (Robusta coffee).